Here is a 200-residue protein sequence, read N- to C-terminus: Mediator of RNA polymerase II transcription subunit 22 (200 aa).

A coiled-coil region spans residues 93 to 122; it reads SVNEAIDQRNQQLRTLQEECDRKLITLRDE. Residues 166-200 are disordered; the sequence is LSAPLLASPEPSAGPLQVAAPAHSHAGGPGPTEHA.

The protein belongs to the Mediator complex subunit 22 family. As to quaternary structure, component of the Mediator complex, which is composed of MED1, MED4, MED6, MED7, MED8, MED9, MED10, MED11, MED12, MED13, MED13L, MED14, MED15, MED16, MED17, MED18, MED19, MED20, MED21, MED22, MED23, MED24, MED25, MED26, MED27, MED29, MED30, MED31, CCNC, CDK8 and CDC2L6/CDK11. The MED12, MED13, CCNC and CDK8 subunits form a distinct module termed the CDK8 module. Mediator containing the CDK8 module is less active than Mediator lacking this module in supporting transcriptional activation. Individual preparations of the Mediator complex lacking one or more distinct subunits have been variously termed ARC, CRSP, DRIP, PC2, SMCC and TRAP.

The protein localises to the nucleus. Component of the Mediator complex, a coactivator involved in the regulated transcription of nearly all RNA polymerase II-dependent genes. Mediator functions as a bridge to convey information from gene-specific regulatory proteins to the basal RNA polymerase II transcription machinery. Mediator is recruited to promoters by direct interactions with regulatory proteins and serves as a scaffold for the assembly of a functional preinitiation complex with RNA polymerase II and the general transcription factors. This Homo sapiens (Human) protein is Mediator of RNA polymerase II transcription subunit 22 (MED22).